Here is a 284-residue protein sequence, read N- to C-terminus: RNase adapter protein RapZ (284 aa).

ATP is bound at residue 8-15 (GRSGSGKS). Residue 56 to 59 (DVRN) participates in GTP binding. Residues 266-284 (RSRGKNVQSRHRTLEKRRS) are RNA-binding.

Belongs to the RapZ-like family. RapZ subfamily. Homotrimer.

Functionally, modulates the synthesis of GlmS, by affecting the processing and stability of the regulatory small RNA GlmZ. When glucosamine-6-phosphate (GlcN6P) concentrations are high in the cell, RapZ binds GlmZ and targets it to cleavage by RNase E. Consequently, GlmZ is inactivated and unable to activate GlmS synthesis. Under low GlcN6P concentrations, RapZ is sequestered and inactivated by an other regulatory small RNA, GlmY, preventing GlmZ degradation and leading to synthesis of GlmS. The polypeptide is RNase adapter protein RapZ (Erwinia tasmaniensis (strain DSM 17950 / CFBP 7177 / CIP 109463 / NCPPB 4357 / Et1/99)).